Reading from the N-terminus, the 207-residue chain is LexA repressor (207 aa).

Residues 28-48 (VREIGEAVGLASSSTVHGHLA) constitute a DNA-binding region (H-T-H motif). Active-site for autocatalytic cleavage activity residues include Ser-129 and Lys-167.

The protein belongs to the peptidase S24 family. In terms of assembly, homodimer.

It carries out the reaction Hydrolysis of Ala-|-Gly bond in repressor LexA.. Its function is as follows. Represses a number of genes involved in the response to DNA damage (SOS response), including recA and lexA. In the presence of single-stranded DNA, RecA interacts with LexA causing an autocatalytic cleavage which disrupts the DNA-binding part of LexA, leading to derepression of the SOS regulon and eventually DNA repair. This Brevibacillus brevis (strain 47 / JCM 6285 / NBRC 100599) protein is LexA repressor.